Reading from the N-terminus, the 228-residue chain is Tumor necrosis factor receptor superfamily member 18 (228 aa).

Positions 1–19 (MGAWAMLYGVSMLCVLDLG) are cleaved as a signal peptide. The Extracellular portion of the chain corresponds to 20 to 153 (QPSVVEEPGC…EPLPTEQYGH (134 aa)). 3 TNFR-Cys repeats span residues 28–61 (GCGP…ERCI), 62–101 (CVTP…FRCV), and 102–142 (ACAM…AVCI). 5 cysteine pairs are disulfide-bonded: Cys-29/Cys-44, Cys-62/Cys-74, Cys-69/Cys-82, Cys-103/Cys-122, and Cys-116/Cys-141. N-linked (GlcNAc...) asparagine glycans are attached at residues Asn-36 and Asn-40. N-linked (GlcNAc...) asparagine glycans are attached at residues Asn-121 and Asn-134. Residues 154–174 (LTVIFLVMAACIFFLTTVQLG) traverse the membrane as a helical segment. Over 175 to 228 (LHIWQLRRQHMCPRETQPFAEVQLSAEDACSFQFPEEERGEQTEEKCHLGGRWP) the chain is Cytoplasmic.

Binds to TRAF1, TRAF2, and TRAF3, but not TRAF5 and TRAF6. Binds through its C-terminus to SIVA1/SIVA. As to expression, preferentially expressed in activated T lymphocytes.

The protein localises to the cell membrane. The protein resides in the secreted. Functionally, receptor for TNFSF18. Seems to be involved in interactions between activated T-lymphocytes and endothelial cells and in the regulation of T-cell receptor-mediated cell death. Mediated NF-kappa-B activation via the TRAF2/NIK pathway. The chain is Tumor necrosis factor receptor superfamily member 18 (Tnfrsf18) from Mus musculus (Mouse).